The primary structure comprises 102 residues: Large ribosomal subunit protein bL21 (102 aa).

It belongs to the bacterial ribosomal protein bL21 family. Part of the 50S ribosomal subunit. Contacts protein L20.

In terms of biological role, this protein binds to 23S rRNA in the presence of protein L20. The polypeptide is Large ribosomal subunit protein bL21 (Staphylococcus haemolyticus (strain JCSC1435)).